The chain runs to 853 residues: Deubiquitinase otu (853 aa).

The segment at 1 to 20 (MDMQVQRPITSGSRQAPDPY) is disordered. The OTU domain maps to 29–150 (LYRKHTARDA…ENHFDSVYDV (122 aa)). Asp-37 is an active-site residue. Ser-40 serves as the catalytic Nucleophile. His-143 is a catalytic residue. In terms of domain architecture, Tudor spans 336–396 (NFKVGAKCKV…HPLPPDEYRP (61 aa)). Residues 396 to 853 (PWSLPFRYHR…AAVYAATRHH (458 aa)) form an LC domain region. A compositionally biased stretch (basic and acidic residues) spans 460 to 470 (QDDEQRDHNDP). 4 disordered regions span residues 460–531 (QDDE…YVPM), 681–704 (AVES…LEKS), 732–794 (GPAA…AAQG), and 817–853 (NMDP…TRHH). Over residues 499–517 (SRVQPQNSSSSQNQEVSGS) the composition is skewed to low complexity. Over residues 747 to 758 (NGSQFSFYTTPS) the composition is skewed to polar residues. Pro residues predominate over residues 769-778 (LLQPPPPPPI). Composition is skewed to low complexity over residues 783–794 (AGPPQLGGAAQG) and 820–838 (PSAQ…APLS).

In terms of assembly, self aggregates, forming amyloid-like fibrillar helical structures; protein aggregation is mediated by the C-terminal LC domain, is enhanced by RNA binding and is essential for deubiquitinase activity. Interacts (via OTU domain) with bam (via C-terminus); the interaction enhances otu aggregation and deubiquitinase activity. Together with bam interacts with CycA/cyclin-A; the interaction stabilizes CycA by promoting its deubiquitination. Together with bam interacts with Traf6. Interacts with Hrb27C; the interaction is RNA-independent. Associates (via N-terminus) with mRNP complexes; the interaction is weak. Expressed at high levels in the ovary, at low levels in the brain and fat body, and at moderate levels in the gut.

It is found in the cytoplasm. It localises to the cell cortex. Its subcellular location is the perinuclear region. With respect to regulation, activated by protein aggregation, which is mediated by the LC domain and enhanced by RNA binding. In terms of biological role, catalytic component of a deubiquitinase complex consisting of bam and otu. The complex deubiquitinates K63-linked polyubiquitinated proteins; this antagonizes the ubiquitination activity of Traf6 and regulates the IMD immune signaling pathway. Otu-bam deubiquitinase activity is regulated by Traf6 dependent immune signaling regulation of bam expression levels; this forms a feedback loop that regulates the IMD immune signaling pathway and balances gut immune activity during aging. The complex deubiquitinates and stabilizes CycA/cyclin-A to regulate CycA-dependent differentiation. Involved in grk mRNA localization to the dorsal anterior region of the oocyte required for dorsal-ventral axis determination; may function as a ribonuclear protein complex together with sqd and Hrb27C. May regulate actin cytoskeleton organization in differentiating cystocytes during fusome maturation; required for efficient nurse cell cytoplasmic dumping during oogenesis. Essential for female fertility; involved in germ cell proliferation and germ cell differentiation. Involved in the early stages of germ cell proliferation and differentiation during oogenesis. Required for polytene chromosome dispersal in nurse cells during oogenesis. Functionally, involved in the later stages of germ cell proliferation and differentiation during oogenesis. This Drosophila melanogaster (Fruit fly) protein is Deubiquitinase otu.